A 308-amino-acid chain; its full sequence is Glutamyl-Q tRNA(Asp) synthetase (308 aa).

L-glutamate is bound by residues 19–23 (RFAPS) and glutamate 55. The 'HIGH' region motif lies at 22–32 (PSPSGELHFGS). The Zn(2+) site is built by cysteine 111, cysteine 113, tyrosine 125, and cysteine 129. L-glutamate is bound by residues tyrosine 182 and arginine 200. Positions 238 to 242 (KLSKQ) match the 'KMSKS' region motif. Lysine 241 lines the ATP pocket.

This sequence belongs to the class-I aminoacyl-tRNA synthetase family. GluQ subfamily. Zn(2+) is required as a cofactor.

Catalyzes the tRNA-independent activation of glutamate in presence of ATP and the subsequent transfer of glutamate onto a tRNA(Asp). Glutamate is transferred on the 2-amino-5-(4,5-dihydroxy-2-cyclopenten-1-yl) moiety of the queuosine in the wobble position of the QUC anticodon. This chain is Glutamyl-Q tRNA(Asp) synthetase, found in Escherichia coli (strain K12 / MC4100 / BW2952).